The primary structure comprises 280 residues: Polyamine aminopropyltransferase (280 aa).

The PABS domain occupies glycine 2–valine 235. Glutamine 29 contributes to the S-methyl-5'-thioadenosine binding site. Spermidine contacts are provided by histidine 60 and aspartate 84. S-methyl-5'-thioadenosine is bound by residues glutamate 104 and aspartate 136–glycine 137. Residue aspartate 155 is the Proton acceptor of the active site. Residue proline 162 coordinates S-methyl-5'-thioadenosine.

Belongs to the spermidine/spermine synthase family. Homodimer or homotetramer.

The protein resides in the cytoplasm. It carries out the reaction S-adenosyl 3-(methylsulfanyl)propylamine + putrescine = S-methyl-5'-thioadenosine + spermidine + H(+). Its pathway is amine and polyamine biosynthesis; spermidine biosynthesis; spermidine from putrescine: step 1/1. In terms of biological role, catalyzes the irreversible transfer of a propylamine group from the amino donor S-adenosylmethioninamine (decarboxy-AdoMet) to putrescine (1,4-diaminobutane) to yield spermidine. The chain is Polyamine aminopropyltransferase from Parasynechococcus marenigrum (strain WH8102).